The following is a 173-amino-acid chain: Dual-action ribosomal maturation protein DarP (173 aa).

The protein belongs to the DarP family.

Its subcellular location is the cytoplasm. Its function is as follows. Member of a network of 50S ribosomal subunit biogenesis factors which assembles along the 30S-50S interface, preventing incorrect 23S rRNA structures from forming. Promotes peptidyl transferase center (PTC) maturation. This Pseudomonas entomophila (strain L48) protein is Dual-action ribosomal maturation protein DarP.